Consider the following 394-residue polypeptide: Proliferation-associated protein 2G4 (394 aa).

Ser-2 carries the N-acetylserine modification. Residue Ser-2 is modified to Phosphoserine. A necessary for nucleolar localization region spans residues 2 to 48; sequence SGEDEQQEQTIAEDLVVTKYKMGGDIANRVLRSLVEASSSGVSVLSL. Positions 46 to 54 are RNA-binding; the sequence is LSLCEKGDA. Lys-298 participates in a covalent cross-link: Glycyl lysine isopeptide (Lys-Gly) (interchain with G-Cter in SUMO2). Residues 301–394 are necessary for nucleolar localization; sequence LLQPFNVLYE…ETLEENGAGD (94 aa). Position 335 is a phosphoserine (Ser-335). Residues 358-394 form a disordered region; the sequence is LQSSASRKTQKKKKKKASKTAENATSGETLEENGAGD. Ser-361 is modified (phosphoserine; by PKC/PRKCD). The interval 361 to 375 is interaction with RNA; that stretch reads SASRKTQKKKKKKAS. The segment covering 365–375 has biased composition (basic residues); that stretch reads KTQKKKKKKAS. Phosphothreonine is present on residues Thr-366 and Thr-386.

It belongs to the peptidase M24 family. Isoform 2 interacts with the cytoplasmic domain of non-phosphorylated ERBB3; the interaction requires PKC activity. Interacts with AR. Treatment with HRG leads to dissociation from ERBB3 and increases association with AR. Interacts with nucleolin/NCL. Component of a ribonucleoprotein complex containing at least PA2G4, NCL, TOP1, PABPC2, RPLP0, acetylated histone H1 (HIST1H1A or H1F1), histone H1 2/4, RPL4, RPL8, RPL15, RPL18, RPL18A, RPL21, RPL11, RPL12, RPL28, RPL27, RPLP2 and RPL24. Interacts with HDAC2. Interacts with RB1; the interaction is enhanced upon PA2G4 dephosphorylation. Isoform 1 and isoform 2 interact with RNF20. Isoform 2 interacts with HUWE1. Interacts with AKT1. Interacts with DNAJC21. In terms of processing, phosphorylated on serine and threonine residues. Phosphorylation is enhanced by HRG treatment. Basal phosphorylation is PKC-dependent and HRG-induced phosphorylation is predominantly PKC-independent. Phosphorylation at Ser-361 by PKC/PRKCD regulates its nucleolar localization. Isoform 2 is polyubiquitinated, leading to proteasomal degradation and phosphorylation by PKC/PRKCD enhances polyubiquitination.

The protein localises to the cytoplasm. It localises to the nucleus. It is found in the nucleolus. Its function is as follows. May play a role in a ERBB3-regulated signal transduction pathway. Seems be involved in growth regulation. Acts a corepressor of the androgen receptor (AR) and is regulated by the ERBB3 ligand neuregulin-1/heregulin (HRG). Inhibits transcription of some E2F1-regulated promoters, probably by recruiting histone acetylase (HAT) activity. Binds RNA. Associates with 28S, 18S and 5.8S mature rRNAs, several rRNA precursors and probably U3 small nucleolar RNA. May be involved in regulation of intermediate and late steps of rRNA processing. May be involved in ribosome assembly. Mediates cap-independent translation of specific viral IRESs (internal ribosomal entry site). Together with PTBP1 is required for the translation initiation on the foot-and-mouth disease virus (FMDV) IRES. Regulates cell proliferation, differentiation, and survival. Isoform 1 suppresses apoptosis whereas isoform 2 promotes cell differentiation. This chain is Proliferation-associated protein 2G4 (Pa2g4), found in Rattus norvegicus (Rat).